The chain runs to 289 residues: Phosphatidylinositol:ceramide inositolphosphotransferase 3 (289 aa).

5 helical membrane-spanning segments follow: residues 33–53, 77–97, 115–135, 169–189, and 199–219; these read LVLA…GVHY, AFFS…WTFH, VFVY…ATQL, VIYG…LVFV, and RWIK…IIAS. Residue His181 is part of the active site. Catalysis depends on residues His222 and Asp226. Residues 223–243 form a helical membrane-spanning segment; the sequence is YTVDIVVAWYTVNLVMFYVDS. Residues 249–289 form a disordered region; that stretch reads AERSSGPSPTPLLPLSTKDSKNKSKEDHQRLLNENNVADDH. Residues 266 to 279 are compositionally biased toward basic and acidic residues; sequence KDSKNKSKEDHQRL. Over residues 280-289 the composition is skewed to polar residues; it reads LNENNVADDH.

Belongs to the sphingomyelin synthase family. Mostly expressed in stems and flowers, and, to a lower extent, in leaves, roots and siliques.

The protein resides in the membrane. Catalyzes the transfer of the phosphorylinositol group from phosphatidylinositol (PI) to phytoceramide, an essential step in sphingolipid biosynthesis. This is Phosphatidylinositol:ceramide inositolphosphotransferase 3 (IPCS3) from Arabidopsis thaliana (Mouse-ear cress).